Reading from the N-terminus, the 125-residue chain is Basic leucine zipper transcriptional factor ATF-like (125 aa).

Positions 1–14 (MPHSSDSSDSSFSR) are enriched in low complexity. The interval 1–58 (MPHSSDSSDSSFSRSPPPGKQDSSDDVRRVQRREKNRIAAQKSRQRQTQKADTLHLES) is disordered. Positions 26–89 (DVRRVQRREK…KYFTSVLNSH (64 aa)) constitute a bZIP domain. The tract at residues 28–50 (RRVQRREKNRIAAQKSRQRQTQK) is basic motif. Ser43 is modified (phosphoserine). Thr48 carries the phosphothreonine modification. The interval 54-75 (LHLESEDLEKQNAALRKEIKQL) is leucine-zipper.

Belongs to the bZIP family. As to quaternary structure, heterodimer; mainly heterodimerizes with JUNB. The BATF-JUNB heterodimer interacts with IRF4 and IRF8. Interacts (via bZIP domain) with IRF4 and IRF8; the interaction is direct. Also forms heterodimers with JUN and JUND. Also interacts with IFI35. Phosphorylated on serine and threonine residues and at least one tyrosine residue. Phosphorylation at Ser-43 inhibit DNA binding activity and transforms it as a negative regulator of AP-1 mediated transcription. Post-translationally, phosphorylated. In terms of tissue distribution, expressed at highest levels in lung, and at lower levels in placenta, liver, kidney, spleen, and peripheral blood. Detected in SW480 colorectal cancer cell line and several hematopoietic tumor cell lines, including Raji Burkitt's lymphoma. Strongly expressed in mature B- and T-lymphocytes. Also expressed in moderate levels in lymph node and appendix and at low levels in thymus and bone marrow.

It localises to the nucleus. The protein resides in the cytoplasm. Its function is as follows. AP-1 family transcription factor that controls the differentiation of lineage-specific cells in the immune system: specifically mediates the differentiation of T-helper 17 cells (Th17), follicular T-helper cells (TfH), CD8(+) dendritic cells and class-switch recombination (CSR) in B-cells. Acts via the formation of a heterodimer with JUNB that recognizes and binds DNA sequence 5'-TGA[CG]TCA-3'. The BATF-JUNB heterodimer also forms a complex with IRF4 (or IRF8) in immune cells, leading to recognition of AICE sequence (5'-TGAnTCA/GAAA-3'), an immune-specific regulatory element, followed by cooperative binding of BATF and IRF4 (or IRF8) and activation of genes. Controls differentiation of T-helper cells producing interleukin-17 (Th17 cells) by binding to Th17-associated gene promoters: regulates expression of the transcription factor RORC itself and RORC target genes such as IL17 (IL17A or IL17B). Also involved in differentiation of follicular T-helper cells (TfH) by directing expression of BCL6 and MAF. In B-cells, involved in class-switch recombination (CSR) by controlling the expression of both AICDA and of germline transcripts of the intervening heavy-chain region and constant heavy-chain region (I(H)-C(H)). Following infection, can participate in CD8(+) dendritic cell differentiation via interaction with IRF4 and IRF8 to mediate cooperative gene activation. Regulates effector CD8(+) T-cell differentiation by regulating expression of SIRT1. Following DNA damage, part of a differentiation checkpoint that limits self-renewal of hematopoietic stem cells (HSCs): up-regulated by STAT3, leading to differentiation of HSCs, thereby restricting self-renewal of HSCs. This Homo sapiens (Human) protein is Basic leucine zipper transcriptional factor ATF-like (BATF).